A 347-amino-acid chain; its full sequence is Uroporphyrinogen decarboxylase (347 aa).

Substrate is bound by residues 24-28, Phe-42, Asp-73, Tyr-150, Thr-205, and His-320; that span reads RQAGR.

This sequence belongs to the uroporphyrinogen decarboxylase family. In terms of assembly, homodimer.

The protein localises to the cytoplasm. The catalysed reaction is uroporphyrinogen III + 4 H(+) = coproporphyrinogen III + 4 CO2. Its pathway is porphyrin-containing compound metabolism; protoporphyrin-IX biosynthesis; coproporphyrinogen-III from 5-aminolevulinate: step 4/4. Its function is as follows. Catalyzes the decarboxylation of four acetate groups of uroporphyrinogen-III to yield coproporphyrinogen-III. This Gloeobacter violaceus (strain ATCC 29082 / PCC 7421) protein is Uroporphyrinogen decarboxylase.